The chain runs to 244 residues: Venom nerve growth factor 2 (244 aa).

An N-terminal signal peptide occupies residues methionine 1–alanine 18. Residues alanine 19 to arginine 125 constitute a propeptide that is removed on maturation. The segment covering glycine 47–aspartate 66 has biased composition (basic and acidic residues). A disordered region spans residues glycine 47–leucine 69. Cystine bridges form between cysteine 139–cysteine 205 and cysteine 181–cysteine 233.

Belongs to the NGF-beta family. In terms of assembly, homodimer; non-covalently linked. In terms of tissue distribution, expressed by the venom gland.

The protein localises to the secreted. Its function is as follows. Nerve growth factor is important for the development and maintenance of the sympathetic and sensory nervous systems. It stimulates division and differentiation of sympathetic and embryonic sensory neurons as well as basal forebrain cholinergic neurons in the brain. Its relevance in the snake venom is not clear. However, it has been shown to inhibit metalloproteinase-dependent proteolysis of platelet glycoprotein Ib alpha, suggesting a metalloproteinase inhibition to prevent metalloprotease autodigestion and/or protection against prey proteases. Binds a lipid between the two protein chains in the homodimer. The lipid-bound form promotes histamine relase from mouse mast cells, contrary to the lipid-free form. The sequence is that of Venom nerve growth factor 2 from Notechis scutatus scutatus (Mainland tiger snake).